The chain runs to 152 residues: Cytochrome c-type biogenesis CcmH-like mitochondrial protein (152 aa).

The Mitochondrial intermembrane segment spans residues 1 to 83 (MATEEDVKQR…ILYTPKFDLQ (83 aa)). Positions 26 and 29 each coordinate heme. A helical transmembrane segment spans residues 84–104 (TAAIWLSPVIVGGVAAGVWAY). Residues 105–152 (KKHRQRTNVHIMALNLVRGVPLTPREKETMLDVLTPPPPANKWWWPGK) lie on the Mitochondrial matrix side of the membrane.

This sequence belongs to the CcmH/CycL/Ccl2/NrfF family.

The protein resides in the mitochondrion inner membrane. In terms of biological role, plays a role in mitochondrial cytochrome c maturation. Probable component of a heme lyase complex involved in the reduction of apocytochrome c. This chain is Cytochrome c-type biogenesis CcmH-like mitochondrial protein, found in Oryza sativa subsp. indica (Rice).